The following is a 379-amino-acid chain: Succinyl-diaminopimelate desuccinylase (379 aa).

Histidine 70 is a binding site for Zn(2+). Residue aspartate 72 is part of the active site. Aspartate 103 is a binding site for Zn(2+). Catalysis depends on glutamate 137, which acts as the Proton acceptor. Positions 138, 166, and 352 each coordinate Zn(2+).

The protein belongs to the peptidase M20A family. DapE subfamily. As to quaternary structure, homodimer. It depends on Zn(2+) as a cofactor. Requires Co(2+) as cofactor.

It carries out the reaction N-succinyl-(2S,6S)-2,6-diaminopimelate + H2O = (2S,6S)-2,6-diaminopimelate + succinate. It functions in the pathway amino-acid biosynthesis; L-lysine biosynthesis via DAP pathway; LL-2,6-diaminopimelate from (S)-tetrahydrodipicolinate (succinylase route): step 3/3. Catalyzes the hydrolysis of N-succinyl-L,L-diaminopimelic acid (SDAP), forming succinate and LL-2,6-diaminopimelate (DAP), an intermediate involved in the bacterial biosynthesis of lysine and meso-diaminopimelic acid, an essential component of bacterial cell walls. The protein is Succinyl-diaminopimelate desuccinylase of Burkholderia mallei (strain NCTC 10247).